Reading from the N-terminus, the 605-residue chain is NADH-ubiquinone oxidoreductase chain 5 (605 aa).

The next 15 helical transmembrane spans lie at T8–T28, I34–F54, M87–Y107, F117–L137, L140–G160, A171–F191, T241–I261, I273–L293, I301–Q321, L324–G344, L366–L386, L409–F429, L457–I477, M482–L502, and I584–F604.

It belongs to the complex I subunit 5 family. Core subunit of respiratory chain NADH dehydrogenase (Complex I) which is composed of 45 different subunits.

It is found in the mitochondrion inner membrane. It catalyses the reaction a ubiquinone + NADH + 5 H(+)(in) = a ubiquinol + NAD(+) + 4 H(+)(out). Its function is as follows. Core subunit of the mitochondrial membrane respiratory chain NADH dehydrogenase (Complex I) which catalyzes electron transfer from NADH through the respiratory chain, using ubiquinone as an electron acceptor. Essential for the catalytic activity and assembly of complex I. This is NADH-ubiquinone oxidoreductase chain 5 (MT-ND5) from Rousettus amplexicaudatus (Common rousette).